A 508-amino-acid polypeptide reads, in one-letter code: Photosystem II CP47 reaction center protein (508 aa).

Helical transmembrane passes span 21–36 (SVHIMHTALVAGWAGS), 101–115 (IVFSGLCFLAAIWHW), 140–156 (GIHLFLSGVACFGFGAF), 203–218 (IAAGTLGILAGLFHLS), 237–252 (VLSSSIAAVFFAAFVV), and 457–472 (SFALLFFFGHIWHGSR).

Belongs to the PsbB/PsbC family. PsbB subfamily. As to quaternary structure, PSII is composed of 1 copy each of membrane proteins PsbA, PsbB, PsbC, PsbD, PsbE, PsbF, PsbH, PsbI, PsbJ, PsbK, PsbL, PsbM, PsbT, PsbX, PsbY, PsbZ, Psb30/Ycf12, at least 3 peripheral proteins of the oxygen-evolving complex and a large number of cofactors. It forms dimeric complexes. It depends on Binds multiple chlorophylls. PSII binds additional chlorophylls, carotenoids and specific lipids. as a cofactor.

It localises to the plastid. The protein resides in the chloroplast thylakoid membrane. One of the components of the core complex of photosystem II (PSII). It binds chlorophyll and helps catalyze the primary light-induced photochemical processes of PSII. PSII is a light-driven water:plastoquinone oxidoreductase, using light energy to abstract electrons from H(2)O, generating O(2) and a proton gradient subsequently used for ATP formation. This is Photosystem II CP47 reaction center protein from Capsella bursa-pastoris (Shepherd's purse).